A 322-amino-acid chain; its full sequence is Agmatinase (322 aa).

Mn(2+) is bound by residues histidine 136, aspartate 160, histidine 162, aspartate 164, aspartate 243, and aspartate 245.

The protein belongs to the arginase family. Agmatinase subfamily. Mn(2+) serves as cofactor.

The enzyme catalyses agmatine + H2O = urea + putrescine. The protein operates within amine and polyamine biosynthesis; putrescine biosynthesis via agmatine pathway; putrescine from agmatine: step 1/1. Catalyzes the formation of putrescine from agmatine. This Chromobacterium violaceum (strain ATCC 12472 / DSM 30191 / JCM 1249 / CCUG 213 / NBRC 12614 / NCIMB 9131 / NCTC 9757 / MK) protein is Agmatinase.